The following is a 220-amino-acid chain: Zip homologous protein 1 (220 aa).

The segment at 6-44 (CNGCGCSPSKRQFFITACSHVFCETCRTTPTADFCHLCK) adopts an RING-type zinc-finger fold. Residues 124-155 (LTSFEENNRKKLEDIERENEKLRNLISALELK) adopt a coiled-coil conformation. 2 disordered regions span residues 166–186 (EFFMQGTPTSSNPSVAGSDVD) and 201–220 (RSDSSSSNCSSQSNRGGSLF). Polar residues predominate over residues 171-180 (GTPTSSNPSV).

In terms of assembly, interacts with zhp-2; the interaction is required for their chromosome association and stability. In terms of tissue distribution, expressed in the germline.

The protein resides in the chromosome. Recruited co-dependently with zhp-2 to the synaptonemal complex between homologous chromosome pairs to regulate the formation and number of crossover events between homologs during meiotic recombination. Together with zhp-2, promotes the accumulation of pro-crossover proteins, including zhp-3 and zhp-4, at a designated crossover site along the recombination intermediate. Limits the number of crossover sites along a recombination intermediate by restricting the association of these pro-crossover proteins with other recombination sites during late prophase. Also, together with zhp-2, plays a role in chromosome remodeling following crossover formation to promote two successive rounds of chromosome segregation during meiosis. The protein is Zip homologous protein 1 of Caenorhabditis elegans.